The chain runs to 1240 residues: Phospholipid-transporting ATPase 6 (1240 aa).

Over 1–75 the chain is Cytoplasmic; the sequence is MARRRIRSRI…TTRYNLLTFL (75 aa). Residues 76–97 form a helical membrane-spanning segment; sequence PKCLYEQFHRVANFYFLVAAIL. Topologically, residues 98–101 are extracellular; it reads SVFP. The chain crosses the membrane as a helical span at residues 102 to 124; the sequence is LSPFNKWSMIAPLVFVVGLSMGK. The Cytoplasmic portion of the chain corresponds to 125–306; it reads EALEDWRRFM…SRIEKRMDYI (182 aa). Residues 307–328 traverse the membrane as a helical segment; that stretch reads IYTLFALLLTVSFISSLGFAVM. Residues 329-360 are Extracellular-facing; the sequence is TKLLMAEWWYLRPDKPESLTNPTNPLYAWVVH. Residues 361–378 traverse the membrane as a helical segment; sequence LITALLLYGYLIPISLYV. At 379–943 the chain is on the cytoplasmic side; sequence SIEVVKVLQA…HGHWCYKRIA (565 aa). Aspartate 426 (4-aspartylphosphate intermediate) is an active-site residue. A Glycyl lysine isopeptide (Lys-Gly) (interchain with G-Cter in ubiquitin) cross-link involves residue lysine 625. Mg(2+)-binding residues include aspartate 888 and aspartate 892. Residues 944-963 form a helical membrane-spanning segment; sequence QMICYFFYKNITFGLTLFYF. At 964-977 the chain is on the extracellular side; it reads ECFTGFSGQSIYND. Residues 978 to 997 traverse the membrane as a helical segment; that stretch reads SYLLLFNVVLTSLPVISLGV. Over 998–1027 the chain is Cytoplasmic; the sequence is FEQDVPSDVCLQFPALYQQGPKNLFFDWYR. A helical transmembrane segment spans residues 1028–1050; sequence ILGWMGNGVYASIVIFTLNLGIF. Residues 1051-1063 are Extracellular-facing; that stretch reads HVQSFRSDGQTAD. Residues 1064–1086 form a helical membrane-spanning segment; that stretch reads MNAMGTAMFTCIIWAVNVQIALT. The Cytoplasmic segment spans residues 1087–1092; the sequence is MSHFTW. Residues 1093-1113 traverse the membrane as a helical segment; that stretch reads IQHVMIWGSIGAWYVFLALYG. At 1114–1130 the chain is on the extracellular side; that stretch reads MLPVKLSGNIFHMLVEI. Residues 1131 to 1155 form a helical membrane-spanning segment; that stretch reads LAPAPIFWLTSLLVIAATTLPYLFH. Over 1156 to 1240 the chain is Cytoplasmic; that stretch reads ISYQRSVNPL…SNDTPSSNSQ (85 aa).

Belongs to the cation transport ATPase (P-type) (TC 3.A.3) family. Type IV subfamily.

Its subcellular location is the cell membrane. The protein resides in the endomembrane system. The enzyme catalyses ATP + H2O + phospholipidSide 1 = ADP + phosphate + phospholipidSide 2.. In terms of biological role, involved in transport of phospholipids and in regulation of pollen plasma membrane lipid asymmetry. The chain is Phospholipid-transporting ATPase 6 from Arabidopsis thaliana (Mouse-ear cress).